Reading from the N-terminus, the 62-residue chain is Omega-conotoxin-like Bu11 (62 aa).

A signal peptide spans 1 to 7 (ACQLITA). Residues 8-27 (EDSRGTQLHRALRSTSKVSK) constitute a propeptide that is removed on maturation. Cystine bridges form between Cys31/Cys46, Cys38/Cys49, and Cys45/Cys56.

The protein belongs to the conotoxin O1 superfamily. As to expression, expressed by the venom duct.

The protein localises to the secreted. Its function is as follows. Omega-conotoxins act at presynaptic membranes, they bind and block voltage-gated calcium channels (Cav). The polypeptide is Omega-conotoxin-like Bu11 (Conus bullatus (Bubble cone)).